A 438-amino-acid polypeptide reads, in one-letter code: Probable chaperone protein ClpB 1 (438 aa).

The stretch at 1-94 (MNTADTRQRL…NNRKIEARQA (94 aa)) forms a coiled coil. Residues 1–118 (MNTADTRQRL…IADIVSRWTG (118 aa)) are linker. Positions 128–345 (ERQKLLGIES…RIDEVILFTP (218 aa)) are NBD2. ATP is bound at residue 178 to 185 (GPTGVGKT). Residues 346-438 (LTRENLREIV…ENDAIVMKKK (93 aa)) form a C-terminal region.

Belongs to the ClpA/ClpB family. Homohexamer. The oligomerization is ATP-dependent.

The protein resides in the cytoplasm. Functionally, part of a stress-induced multi-chaperone system, it is involved in the recovery of the cell from heat-induced damage, in cooperation with DnaK, DnaJ and GrpE. Acts before DnaK, in the processing of protein aggregates. Protein binding stimulates the ATPase activity; ATP hydrolysis unfolds the denatured protein aggregates, which probably helps expose new hydrophobic binding sites on the surface of ClpB-bound aggregates, contributing to the solubilization and refolding of denatured protein aggregates by DnaK. This Chlorobaculum tepidum (strain ATCC 49652 / DSM 12025 / NBRC 103806 / TLS) (Chlorobium tepidum) protein is Probable chaperone protein ClpB 1 (clpB1).